The chain runs to 162 residues: Regulatory protein RecX (162 aa).

The protein belongs to the RecX family.

It is found in the cytoplasm. Modulates RecA activity. The chain is Regulatory protein RecX from Xanthomonas oryzae pv. oryzae (strain PXO99A).